The chain runs to 379 residues: Mannitol-1-phosphate 5-dehydrogenase (379 aa).

Position 3–14 (3–14 (ALHFGAGNIGRG)) interacts with NAD(+).

This sequence belongs to the mannitol dehydrogenase family.

The catalysed reaction is D-mannitol 1-phosphate + NAD(+) = beta-D-fructose 6-phosphate + NADH + H(+). In Actinobacillus pleuropneumoniae serotype 3 (strain JL03), this protein is Mannitol-1-phosphate 5-dehydrogenase.